A 389-amino-acid chain; its full sequence is Sterol methyltransferase-like 2 (389 aa).

The chain crosses the membrane as a helical span at residues 25–45; it reads LSWKGAVGLVAATGIGYVLII.

This sequence belongs to the class I-like SAM-binding methyltransferase superfamily. Erg6/SMT family.

It is found in the microsome membrane. Functionally, unable to convert squalene, botryococcene, cycloartenol, zymosterol or lanosterol to mono-, di-, tri- or tetramethylated derivatives. This Botryococcus braunii (Green alga) protein is Sterol methyltransferase-like 2 (SMT-2).